A 362-amino-acid chain; its full sequence is S-adenosylmethionine decarboxylase proenzyme 2 (362 aa).

Active-site residues include Glu-9 and Glu-12. Glu-68 serves as a coordination point for substrate. Residue Ser-69 is the Schiff-base intermediate with substrate; via pyruvic acid of the active site. Position 69 is a pyruvic acid (Ser); by autocatalysis (Ser-69). Cys-83 functions as the Proton donor; for catalytic activity in the catalytic mechanism. Active-site proton acceptor; for processing activity residues include Ser-232 and His-245. Glu-249 lines the substrate pocket.

This sequence belongs to the eukaryotic AdoMetDC family. It depends on pyruvate as a cofactor. In terms of processing, is synthesized initially as an inactive proenzyme. Formation of the active enzyme involves a self-maturation process in which the active site pyruvoyl group is generated from an internal serine residue via an autocatalytic post-translational modification. Two non-identical subunits are generated from the proenzyme in this reaction, and the pyruvate is formed at the N-terminus of the alpha chain, which is derived from the carboxyl end of the proenzyme. The post-translation cleavage follows an unusual pathway, termed non-hydrolytic serinolysis, in which the side chain hydroxyl group of the serine supplies its oxygen atom to form the C-terminus of the beta chain, while the remainder of the serine residue undergoes an oxidative deamination to produce ammonia and the pyruvoyl group blocking the N-terminus of the alpha chain.

It carries out the reaction S-adenosyl-L-methionine + H(+) = S-adenosyl 3-(methylsulfanyl)propylamine + CO2. The protein operates within amine and polyamine biosynthesis; S-adenosylmethioninamine biosynthesis; S-adenosylmethioninamine from S-adenosyl-L-methionine: step 1/1. Its function is as follows. Essential for biosynthesis of the polyamines spermidine and spermine. Essential for polyamine homeostasis, and normal plant embryogenesis, growth and development. The sequence is that of S-adenosylmethionine decarboxylase proenzyme 2 from Arabidopsis thaliana (Mouse-ear cress).